The primary structure comprises 438 residues: MNIVALASAYGVGSISIVRLSGDGAYDLAINLCKKPLTPRYAHLRKLYCENMVFLDEAIVIYYKAPFSFTGEDVVEFQTHGGVVVANLIIDELLRLGARVANPGEFSKRAFLNGKMDLVKAESIQSLINARSEGAAKILARTMNGELSVFVNSLRDELIKILAYTETCIDYADDDLPSDILHSSKDLLLNSYKKLEHIINISNSKKGLIDGYKVAIIGRPNVGKSSILNSLLHYERAITSETAGTTRDTIEEQIKFGSHLVRIIDTAGIRDEFDSSIEAAGIEYSKRAAREADIIFCVFDSSQKASLEDRQILEFISNLNKKTIYVLNKSDLEFKFDISLNAVLVSAKLDSTPLSKELESYLNSQDTNDIMLSSNRQIEASRLASEAIKNALELLNESELELFAYELNIALKHIGSITKPMENSELLDKMFSSFCLGK.

Arg-19, Glu-76, and Lys-115 together coordinate (6S)-5-formyl-5,6,7,8-tetrahydrofolate. Positions 211–363 constitute a TrmE-type G domain; the sequence is GYKVAIIGRP…LSKELESYLN (153 aa). Residues 221–226, 240–246, and 265–268 contribute to the GTP site; these read NVGKSS, SETAGTT, and DTAG. Residues Ser-225 and Thr-246 each coordinate Mg(2+). Lys-438 provides a ligand contact to (6S)-5-formyl-5,6,7,8-tetrahydrofolate.

The protein belongs to the TRAFAC class TrmE-Era-EngA-EngB-Septin-like GTPase superfamily. TrmE GTPase family. As to quaternary structure, homodimer. Heterotetramer of two MnmE and two MnmG subunits. It depends on K(+) as a cofactor.

It localises to the cytoplasm. Functionally, exhibits a very high intrinsic GTPase hydrolysis rate. Involved in the addition of a carboxymethylaminomethyl (cmnm) group at the wobble position (U34) of certain tRNAs, forming tRNA-cmnm(5)s(2)U34. This Campylobacter fetus subsp. fetus (strain 82-40) protein is tRNA modification GTPase MnmE.